A 611-amino-acid polypeptide reads, in one-letter code: Dihydroxy-acid dehydratase (611 aa).

Asp81 serves as a coordination point for Mg(2+). Cys122 is a [2Fe-2S] cluster binding site. Residues Asp123 and Lys124 each coordinate Mg(2+). An N6-carboxylysine modification is found at Lys124. [2Fe-2S] cluster is bound at residue Cys195. Glu491 contacts Mg(2+). The active-site Proton acceptor is Ser517.

The protein belongs to the IlvD/Edd family. Homodimer. The cofactor is [2Fe-2S] cluster. Requires Mg(2+) as cofactor.

It catalyses the reaction (2R)-2,3-dihydroxy-3-methylbutanoate = 3-methyl-2-oxobutanoate + H2O. The catalysed reaction is (2R,3R)-2,3-dihydroxy-3-methylpentanoate = (S)-3-methyl-2-oxopentanoate + H2O. The protein operates within amino-acid biosynthesis; L-isoleucine biosynthesis; L-isoleucine from 2-oxobutanoate: step 3/4. It functions in the pathway amino-acid biosynthesis; L-valine biosynthesis; L-valine from pyruvate: step 3/4. Functions in the biosynthesis of branched-chain amino acids. Catalyzes the dehydration of (2R,3R)-2,3-dihydroxy-3-methylpentanoate (2,3-dihydroxy-3-methylvalerate) into 2-oxo-3-methylpentanoate (2-oxo-3-methylvalerate) and of (2R)-2,3-dihydroxy-3-methylbutanoate (2,3-dihydroxyisovalerate) into 2-oxo-3-methylbutanoate (2-oxoisovalerate), the penultimate precursor to L-isoleucine and L-valine, respectively. The protein is Dihydroxy-acid dehydratase of Histophilus somni (strain 129Pt) (Haemophilus somnus).